Reading from the N-terminus, the 474-residue chain is Coiled-coil domain-containing protein 174 (474 aa).

Disordered stretches follow at residues 39–86 (GVFG…REKL) and 129–170 (GATR…PSEE). 2 stretches are compositionally biased toward basic and acidic residues: residues 64 to 86 (RAEK…REKL) and 129 to 142 (GATR…ERDA). Residues 64-98 (RAEKDAEQKLEEQKTLDKSREKLEEKAKLYEKMTK) adopt a coiled-coil conformation. A compositionally biased stretch (acidic residues) spans 148-157 (NDDDDEEEFS). Residue Ser206 is modified to Phosphoserine. A coiled-coil region spans residues 276-317 (LEMLREQTTDQRIKRENIKEKRKAILEARLAKLRQKKMKKSK). 2 disordered regions span residues 309–372 (RQKK…IREW) and 389–461 (ELRA…VTFQ). Composition is skewed to basic and acidic residues over residues 316 to 327 (SKVDGTEEESRA) and 356 to 372 (IQER…IREW). A compositionally biased stretch (polar residues) spans 410–419 (RTGSLSSQPW). A compositionally biased stretch (low complexity) spans 430–453 (GHSSGQSQEPSSSHTSTPASESSP).

It is found in the nucleus. Its function is as follows. Probably involved in neuronal development. The protein is Coiled-coil domain-containing protein 174 (Ccdc174) of Rattus norvegicus (Rat).